The chain runs to 335 residues: Protein-arginine kinase (335 aa).

A Phosphagen kinase C-terminal domain is found at 21 to 244; the sequence is VIISSRIRLA…NQIINEEKQI (224 aa). ATP is bound by residues 24–28, His-82, Arg-115, 166–170, and 197–202; these read SSRIR, RASVM, and RGIYGE.

This sequence belongs to the ATP:guanido phosphotransferase family.

The catalysed reaction is L-arginyl-[protein] + ATP = N(omega)-phospho-L-arginyl-[protein] + ADP + H(+). Catalyzes the specific phosphorylation of arginine residues in proteins. The protein is Protein-arginine kinase of Staphylococcus epidermidis (strain ATCC 12228 / FDA PCI 1200).